The sequence spans 888 residues: MDHNVNAPLRDDVRLLGDLLGECLRQQAGDSIYETVEKIRQASVATRTEGGASLASLRDLLSPLDDATLLEVARAFSQFLNLSNIAEQHHRERLHRQHQRYPGDAGTDQGLQEVLQRLADNDIAKEQISGTLEQLSVELVLTAHPTEVTRRTLIRKYDQMADLLSELDRPDFNEDERELRRERLRRVILAAWCTDEIRREKPTPVDEAKWGFATIEQSLWQAVPDVLRQLEAQLADRGLPAPPSDWAPVKLASWMGGDRDGNPNVTAPVTREVLLLARWMAADLYLRDVENLLADLSMKSASEELLAATGPTHEPYRVLLREVRSRLRLTRRQMEAQVEGLPVPEGQAYLRREELMAPLQLLDRSLRAVGLSDIADGDLKNTLRRLNCFGITLLRLDIRQESTRHSDVLDAITRYLQLGRYSDWDEAARQAFLVDELQARRPLIDAAFRDSEHCTAEVAEVLATCEVIAEQGSEGLGAYVISMATTPSDVMAVMLLQKIAGVREPMRVVPLFETLDDLDGAEQTMSALLALPFYRERVAAGQEIMIGYSDSAKDAGFLGAAWAQYRAQEKLTALFADNGIPLTLFHGRGGSISRGGSPTRMALLSQPPGSVAGRIRVTEQGEVIRFKYGRPSVAVFNLEQYVAATLEATLLPPQAARPEWRQQMQALTDTSVAGYRGVVRDEPELVRYLRTVTPETELSRLALGSRPARRKSDQGISSLRAIPWVFAWTQIRLMLPAWLGTGAALEDAQNDAAQHAMVREMASEWPFFQGVVDMLEMVLAKSDLRVAAWYEERLAGDDPGLMRLGEVLRERLTATVSALSALTGREDLLDNNPVMRWSIRVRDPYTDPLHLLQAELMARLRQQDGDETLESALMVTIAGIAAGLRNTG.

Active-site residues include histidine 144 and lysine 553.

This sequence belongs to the PEPCase type 1 family. It depends on Mg(2+) as a cofactor.

The catalysed reaction is oxaloacetate + phosphate = phosphoenolpyruvate + hydrogencarbonate. Its function is as follows. Forms oxaloacetate, a four-carbon dicarboxylic acid source for the tricarboxylic acid cycle. In Alcanivorax borkumensis (strain ATCC 700651 / DSM 11573 / NCIMB 13689 / SK2), this protein is Phosphoenolpyruvate carboxylase.